Consider the following 66-residue polypeptide: Large ribosomal subunit protein bL31 (66 aa).

Zn(2+) is bound by residues Cys16, Cys18, Cys36, and Cys39.

It belongs to the bacterial ribosomal protein bL31 family. Type A subfamily. In terms of assembly, part of the 50S ribosomal subunit. Requires Zn(2+) as cofactor.

Its function is as follows. Binds the 23S rRNA. This chain is Large ribosomal subunit protein bL31, found in Campylobacter curvus (strain 525.92).